Here is a 153-residue protein sequence, read N- to C-terminus: uncharacterized protein (153 aa).

Positions 1-21 are cleaved as a signal peptide; sequence MKITITSLLFFLVMIVELASA.

This is an uncharacterized protein from Saccharomyces cerevisiae (strain ATCC 204508 / S288c) (Baker's yeast).